An 87-amino-acid polypeptide reads, in one-letter code: Large ribosomal subunit protein bL27 (87 aa).

Positions 1-21 are disordered; the sequence is MAHKKAGGSSRNGRDSESKRL.

Belongs to the bacterial ribosomal protein bL27 family.

The protein is Large ribosomal subunit protein bL27 of Burkholderia ambifaria (strain MC40-6).